A 287-amino-acid polypeptide reads, in one-letter code: Proline iminopeptidase (287 aa).

An AB hydrolase-1 domain is found at 22-271 (PLVLLHGGPG…RSRHMAFIDE (250 aa)). Serine 98 functions as the Nucleophile in the catalytic mechanism. Aspartate 238 is an active-site residue. Catalysis depends on histidine 265, which acts as the Proton donor.

The protein belongs to the peptidase S33 family.

The protein localises to the cell envelope. It catalyses the reaction Release of N-terminal proline from a peptide.. In terms of biological role, releases the N-terminal proline from various substrates. The polypeptide is Proline iminopeptidase (Lactiplantibacillus plantarum (strain ATCC BAA-793 / NCIMB 8826 / WCFS1) (Lactobacillus plantarum)).